The sequence spans 46 residues: uncharacterized protein (46 aa).

This is an uncharacterized protein from Escherichia coli (strain K12).